The following is a 332-amino-acid chain: Glycerol-3-phosphate dehydrogenase [NAD(P)+] (332 aa).

Residues serine 15, tryptophan 16, and lysine 110 each coordinate NADPH. The sn-glycerol 3-phosphate site is built by lysine 110, glycine 137, and serine 139. An NADPH-binding site is contributed by alanine 141. Sn-glycerol 3-phosphate contacts are provided by lysine 192, aspartate 245, serine 255, arginine 256, and asparagine 257. Residue lysine 192 is the Proton acceptor of the active site. Arginine 256 is an NADPH binding site. Glutamate 282 provides a ligand contact to NADPH.

This sequence belongs to the NAD-dependent glycerol-3-phosphate dehydrogenase family.

It localises to the cytoplasm. The enzyme catalyses sn-glycerol 3-phosphate + NAD(+) = dihydroxyacetone phosphate + NADH + H(+). It catalyses the reaction sn-glycerol 3-phosphate + NADP(+) = dihydroxyacetone phosphate + NADPH + H(+). Its pathway is membrane lipid metabolism; glycerophospholipid metabolism. Its function is as follows. Catalyzes the reduction of the glycolytic intermediate dihydroxyacetone phosphate (DHAP) to sn-glycerol 3-phosphate (G3P), the key precursor for phospholipid synthesis. The polypeptide is Glycerol-3-phosphate dehydrogenase [NAD(P)+] (Coxiella burnetii (strain CbuK_Q154) (Coxiella burnetii (strain Q154))).